The following is a 409-amino-acid chain: DEP domain-containing mTOR-interacting protein (409 aa).

M1 carries the post-translational modification N-acetylmethionine. Gly residues predominate over residues 1 to 10 (MEEGSSGGSG). The disordered stretch occupies residues 1–23 (MEEGSSGGSGSSDSNAGGSGGVQ). 2 DEP domains span residues 36–119 (TGEQ…RFRK) and 146–219 (PETT…QFRM). The short motif at 217 to 235 (FRMNFRRRRRLMELLNETS) is the DDEX motif element. Position 235 is a phosphoserine (S235). Residue T241 is modified to Phosphothreonine. Phosphoserine is present on residues S244 and S258. A Phosphothreonine modification is found at T259. Phosphoserine is present on residues S263, S265, S280, S282, S283, S286, and S287. The BetaTrCP degron motif motif lies at 286 to 291 (SSGYFS). Y289 carries the phosphotyrosine modification. A phosphoserine mark is found at S291 and S293. T295 is subject to Phosphothreonine. S297, S298, and S299 each carry phosphoserine. Residues 330 to 407 (TFTIVGDAVG…TIVMEVMEEL (78 aa)) enclose the PDZ domain.

As to quaternary structure, associated component of the mechanistic target of rapamycin complex 1 (mTORC1) which contains MTOR, MLST8 and RPTOR. Associated component of the mechanistic target of rapamycin complex 2 (mTORC2) which contains MTOR, MLST8, PROTOR1, RICTOR, MAPKAP1 and DEPTOR. Interacts (via PDZ domain) with MTOR; interacts with MTOR within both mTORC1 and mTORC2. Interacts (via PDZ domain) with MINAR1 (via N-terminus). Interacts with SIK3. In terms of processing, phosphorylation weakens interaction with MTOR within mTORC1 and mTORC2. Phosphorylated at Ser-286, Ser-287 and Ser-291 in response to mitogenic stimulation by MTOR: DEPTOR is either directly phosphorylated by MTOR or indirectly via proteins kinases that are activated by MTOR, such as CK1/CSNK1A1. Phosphorylation at Ser-286, Ser-287 and Ser-291 promotes ubiquitination by the SCF(BTRC) complex, followed by degradation. Phosphorylation at Ser-235 by MAPK3/ERK1 promotes deubiquitination by USP7, enhancing its stability. Phosphorylation at Tyr-291 by SYK impairs its interaction with MTOR, promoting mTORC1 and mTORC2 signaling. Ubiquitinated; leading to proteasomal degradation. Ubiquitination by the SCF(BTRC) and SCF(FBXW11) complexes following phosphorylation at Ser-286, Ser-287 and Ser-291 by MTOR, leads to its degradation by the proteasome. Deubiquitinated by OTUB1 in response to amino acid via a non-canonical mechanism, leading to DEPTOR stability. Deubiquitinated by USP7 following phosphorylation at Ser-235, promoting its stability.

Its subcellular location is the lysosome membrane. With respect to regulation, inhibited upon phosphatidic acid-binding: phosphatidic acid produced upon mitogenic stimulation promotes DEPTOR dissociatiom from the mTORC1 and mTORC2 complexes, leading to their activation. Specifically binds unsaturated phosphatidic acid, such as 16:0-18:1, 18:0-18:1 and di-18:1. Inhibited when nutrients are present via a feedback loop: phosphorylation by MTOR promotes DEPTOR ubiquitination and degradation. In terms of biological role, negative regulator of the mTORC1 and mTORC2 complexes: inhibits the protein kinase activity of MTOR, thereby inactivating both complexes. DEPTOR inhibits mTORC1 and mTORC2 to induce autophagy. In contrast to AKT1S1/PRAS40, only partially inhibits mTORC1 activity. The sequence is that of DEP domain-containing mTOR-interacting protein from Mus musculus (Mouse).